Consider the following 538-residue polypeptide: Probable cytochrome P450 309a2 (538 aa).

C483 lines the heme pocket.

This sequence belongs to the cytochrome P450 family. It depends on heme as a cofactor.

Its subcellular location is the endoplasmic reticulum membrane. The protein localises to the microsome membrane. May be involved in the metabolism of insect hormones and in the breakdown of synthetic insecticides. The chain is Probable cytochrome P450 309a2 (Cyp309a2) from Drosophila melanogaster (Fruit fly).